A 95-amino-acid chain; its full sequence is Co-chaperonin GroES (95 aa).

It belongs to the GroES chaperonin family. Heptamer of 7 subunits arranged in a ring. Interacts with the chaperonin GroEL.

Its subcellular location is the cytoplasm. Its function is as follows. Together with the chaperonin GroEL, plays an essential role in assisting protein folding. The GroEL-GroES system forms a nano-cage that allows encapsulation of the non-native substrate proteins and provides a physical environment optimized to promote and accelerate protein folding. GroES binds to the apical surface of the GroEL ring, thereby capping the opening of the GroEL channel. The protein is Co-chaperonin GroES of Rickettsia typhi (strain ATCC VR-144 / Wilmington).